The sequence spans 512 residues: Chromatin assembly factor 1 subunit B (512 aa).

WD repeat units lie at residues 16 to 56, 65 to 105, 126 to 165, and 168 to 207; these read DDHT…SSTK, RHTQ…TTLA, SMGSEIYDLCWSVDSNFLIAGAMDNSLRLYDAHTGQLLTQ, and DHSHYVQGVCWDPLNQYIVSESSDRSICLYEIQEEKKNPK. Polar residues predominate over residues 239–257; sequence DESSGISEPIETSNNNESP. The disordered stretch occupies residues 239-261; that stretch reads DESSGISEPIETSNNNESPVSKH. 2 WD repeats span residues 373-413 and 417-458; these read SFSN…PFYR and LHYS…VKSQ. The interval 459-512 is disordered; the sequence is HKISLPEKRSASPSSIDDSQDNTAGGPATTTLIPRKVESSKVSKKRIAPTPVYP. Ser468, Ser470, and Ser473 each carry phosphoserine. Polar residues predominate over residues 469–490; it reads ASPSSIDDSQDNTAGGPATTTL.

The protein belongs to the WD repeat HIR1 family. Component of chromatin assembly factor 1 (CAF-1), composed of pcf1, pcf2 and pcf3. Interacts with pcn1/PCNA during S-phase. Interacts with swi6 at the G1/S-phase transition and early S-phase, but not in the G2 phase. The CAF-1 complex interacts with histone H3-H4 dimers.

It localises to the cytoplasm. The protein resides in the nucleus. Functionally, acts as a component of the histone chaperone complex chromatin assembly factor 1 (CAF-1), which assembles histone octamers onto DNA during replication and repair. CAF-1 performs the first step of the nucleosome assembly process, bringing newly synthesized histones H3 and H4 to replicating DNA; histones H2A/H2B can bind to this chromatin precursor subsequent to DNA replication to complete the histone octamer. Plays a role in the maintenance of heterochromatin. This is Chromatin assembly factor 1 subunit B from Schizosaccharomyces pombe (strain 972 / ATCC 24843) (Fission yeast).